A 598-amino-acid polypeptide reads, in one-letter code: Elongation factor 4 (598 aa).

One can recognise a tr-type G domain in the interval 2-184 (QHIRNFSIIA…AIVARVPAPK (183 aa)). Residues 14–19 (DHGKST) and 131–134 (NKID) contribute to the GTP site.

This sequence belongs to the TRAFAC class translation factor GTPase superfamily. Classic translation factor GTPase family. LepA subfamily.

Its subcellular location is the cell inner membrane. The catalysed reaction is GTP + H2O = GDP + phosphate + H(+). In terms of biological role, required for accurate and efficient protein synthesis under certain stress conditions. May act as a fidelity factor of the translation reaction, by catalyzing a one-codon backward translocation of tRNAs on improperly translocated ribosomes. Back-translocation proceeds from a post-translocation (POST) complex to a pre-translocation (PRE) complex, thus giving elongation factor G a second chance to translocate the tRNAs correctly. Binds to ribosomes in a GTP-dependent manner. This Azoarcus sp. (strain BH72) protein is Elongation factor 4.